Reading from the N-terminus, the 240-residue chain is Phosducin-like protein 2 (240 aa).

The Phosducin domain occupies 54 to 214 (QRDKKIDDMS…MLGQAGAVPT (161 aa)). A phosphoserine mark is found at Ser63 and Ser73. The tract at residues 99–240 (FGSVREISGQ…DLEDKSSDFY (142 aa)) is thioredoxin fold.

It belongs to the phosducin family.

It localises to the cytoplasm. Its function is as follows. Modulates the activation of caspases during apoptosis. The chain is Phosducin-like protein 2 from Drosophila melanogaster (Fruit fly).